The chain runs to 293 residues: MSVQTSQQTVNLQTEFKQTQIQEVLDDLDRELIGLQTVKTRIREIAALLLVDRLRQKLGLSSSNPGLHMSFTGSPGTGKTTVARKMADILYRLGYIKKGHLITVTRDDLVGQYIGHTAPKTKQVLKNAMGGVLFIDEAYYLYRPDNERDYGAEAIEILLQVMENQRDDLVIIFAGYKDKMDRFYTSNPGLASRVANHVNFPDYTPEELLMIGKIMLQEQQYQMTPEAEKVFLQYIQRRMEQPHFANARSVRNALDRARLRQANRIFATPGKKLTKFDLVTIQAEDILKSRLFQ.

75–82 (PGTGKTTV) provides a ligand contact to ATP.

This sequence belongs to the CbxX/CfxQ family. Forms homooligomers. Forms heterohexameric rings with the nuclear-encoded Rca subunit consisting of 3 of each nuclear- and plastidial-encoded subunits that alternate in the ring.

The protein localises to the plastid. The protein resides in the chloroplast. In terms of biological role, required for the expression of ribulose 1,5-bisphosphate carboxylase/oxygenase (RuBisCo). ATPase involved in the activation of red-type RuBisCo, which tends to form inactive complexes with its substrate ribulose 1,5-bisphosphate (RuBP). Catalyzes the release of RuBP from inhibited RuBisCo in an ATP-dependent manner. Activation of RuBisCO involves the ATP-dependent carboxylation of the epsilon-amino group of lysine leading to a carbamate structure. The nuclear-encoded subunit plays a more critical role in activase function than the plastidial-encoded subunit. The polypeptide is Ribulose bisphosphate carboxylase/oxygenase activase, chloroplastic (Cyanidioschyzon merolae (strain NIES-3377 / 10D) (Unicellular red alga)).